A 376-amino-acid polypeptide reads, in one-letter code: Chorismate synthase ARO2 (376 aa).

The residue at position 2 (Ser-2) is an N-acetylserine. Residue His-17 is part of the active site. Residues Ile-39–Asp-61 are disordered. Active-site residues include His-104 and Asp-339.

It belongs to the chorismate synthase family. In terms of assembly, homotetramer.

The enzyme catalyses 5-O-(1-carboxyvinyl)-3-phosphoshikimate = chorismate + phosphate. It catalyses the reaction FMNH2 + NADP(+) = FMN + NADPH + 2 H(+). It participates in metabolic intermediate biosynthesis; chorismate biosynthesis; chorismate from D-erythrose 4-phosphate and phosphoenolpyruvate: step 7/7. Functionally, bifunctional chorismate synthase and flavin reductase that catalyzes the conversion of 5-enolpyruvylshikimate 3-phosphate (EPSP) to form chorismate, which is the last common intermediate in the synthesis of the three aromatic amino acids phenylalanine, tyrosine and tryptophan. Also acts as a flavin reductase (FR) able to generate reduced flavin mononucleotide in the presence of NADPH. The chain is Chorismate synthase ARO2 from Saccharomyces cerevisiae (strain ATCC 204508 / S288c) (Baker's yeast).